A 165-amino-acid chain; its full sequence is UPF0303 protein Bphy_1660 (165 aa).

Belongs to the UPF0303 family.

The chain is UPF0303 protein Bphy_1660 from Paraburkholderia phymatum (strain DSM 17167 / CIP 108236 / LMG 21445 / STM815) (Burkholderia phymatum).